The sequence spans 562 residues: Glucan 1,3-beta-glucosidase 2 (562 aa).

Residues 1–22 (MPLKSFFFSAFLVLCLSKFTQG) form the signal peptide. Asn-50, Asn-77, Asn-86, Asn-90, Asn-106, Asn-157, and Asn-220 each carry an N-linked (GlcNAc...) asparagine glycan. Catalysis depends on Glu-254, which acts as the Proton donor. N-linked (GlcNAc...) asparagine glycosylation is found at Asn-281, Asn-285, Asn-310, Asn-317, and Asn-322. The active-site Nucleophile is the His-334. N-linked (GlcNAc...) asparagine glycans are attached at residues Asn-401, Asn-480, and Asn-539.

It belongs to the glycosyl hydrolase 5 (cellulase A) family.

It is found in the cell membrane. It carries out the reaction Successive hydrolysis of beta-D-glucose units from the non-reducing ends of (1-&gt;3)-beta-D-glucans, releasing alpha-glucose.. The polypeptide is Glucan 1,3-beta-glucosidase 2 (EXG2) (Saccharomyces cerevisiae (strain ATCC 204508 / S288c) (Baker's yeast)).